A 243-amino-acid polypeptide reads, in one-letter code: NAD-dependent protein deacetylase (243 aa).

The Deacetylase sirtuin-type domain occupies 1 to 243 (MRNDLETLKH…VSVVKSLMTE (243 aa)). NAD(+)-binding residues include A24, F35, R36, Q105, I107, D108, and H123. Nicotinamide is bound at residue F35. Positions 107 and 108 each coordinate nicotinamide. Catalysis depends on H123, which acts as the Proton acceptor. 4 residues coordinate Zn(2+): C131, C134, C151, and C154. NAD(+) contacts are provided by S192, S193, N215, and D232.

Belongs to the sirtuin family. Class U subfamily. Zn(2+) is required as a cofactor.

The protein localises to the cytoplasm. The catalysed reaction is N(6)-acetyl-L-lysyl-[protein] + NAD(+) + H2O = 2''-O-acetyl-ADP-D-ribose + nicotinamide + L-lysyl-[protein]. NAD-dependent protein deacetylase which modulates the activities of several enzymes which are inactive in their acetylated form. This chain is NAD-dependent protein deacetylase, found in Staphylococcus aureus (strain MSSA476).